A 136-amino-acid chain; its full sequence is Large ribosomal subunit protein uL16 (136 aa).

Belongs to the universal ribosomal protein uL16 family. Part of the 50S ribosomal subunit.

In terms of biological role, binds 23S rRNA and is also seen to make contacts with the A and possibly P site tRNAs. The chain is Large ribosomal subunit protein uL16 from Buchnera aphidicola subsp. Acyrthosiphon pisum (strain 5A).